The primary structure comprises 150 residues: Large ribosomal subunit protein bL9 (150 aa).

The protein belongs to the bacterial ribosomal protein bL9 family.

In terms of biological role, binds to the 23S rRNA. This is Large ribosomal subunit protein bL9 from Lactiplantibacillus plantarum (strain ATCC BAA-793 / NCIMB 8826 / WCFS1) (Lactobacillus plantarum).